A 156-amino-acid polypeptide reads, in one-letter code: ATP synthase subunit b', chloroplastic (156 aa).

A helical membrane pass occupies residues 24–44 (ATLPLVAIQFILLMVTLNIIL).

Belongs to the ATPase B chain family. F-type ATPases have 2 components, F(1) - the catalytic core - and F(0) - the membrane proton channel. F(1) has five subunits: alpha(3), beta(3), gamma(1), delta(1), epsilon(1). F(0) has four main subunits: a(1), b(1), b'(1) and c(10-14). The alpha and beta chains form an alternating ring which encloses part of the gamma chain. F(1) is attached to F(0) by a central stalk formed by the gamma and epsilon chains, while a peripheral stalk is formed by the delta, b and b' chains.

It localises to the plastid. It is found in the chloroplast thylakoid membrane. In terms of biological role, f(1)F(0) ATP synthase produces ATP from ADP in the presence of a proton or sodium gradient. F-type ATPases consist of two structural domains, F(1) containing the extramembraneous catalytic core and F(0) containing the membrane proton channel, linked together by a central stalk and a peripheral stalk. During catalysis, ATP synthesis in the catalytic domain of F(1) is coupled via a rotary mechanism of the central stalk subunits to proton translocation. Component of the F(0) channel, it forms part of the peripheral stalk, linking F(1) to F(0). The b'-subunit is a diverged and duplicated form of b found in plants and photosynthetic bacteria. The sequence is that of ATP synthase subunit b', chloroplastic from Thalassiosira pseudonana (Marine diatom).